A 387-amino-acid chain; its full sequence is Cysteine desulfurase IscS (387 aa).

Residues 73 to 74 (AT), asparagine 155, glutamine 183, and 203 to 205 (SAH) each bind pyridoxal 5'-phosphate. Residue lysine 206 is modified to N6-(pyridoxal phosphate)lysine. Threonine 241 is a binding site for pyridoxal 5'-phosphate. The active-site Cysteine persulfide intermediate is the cysteine 328. Position 328 (cysteine 328) interacts with [2Fe-2S] cluster.

Belongs to the class-V pyridoxal-phosphate-dependent aminotransferase family. NifS/IscS subfamily. Homodimer. Forms a heterotetramer with IscU, interacts with other sulfur acceptors. Requires pyridoxal 5'-phosphate as cofactor.

Its subcellular location is the cytoplasm. The enzyme catalyses (sulfur carrier)-H + L-cysteine = (sulfur carrier)-SH + L-alanine. The protein operates within cofactor biosynthesis; iron-sulfur cluster biosynthesis. In terms of biological role, master enzyme that delivers sulfur to a number of partners involved in Fe-S cluster assembly, tRNA modification or cofactor biosynthesis. Catalyzes the removal of elemental sulfur atoms from cysteine to produce alanine. Functions as a sulfur delivery protein for Fe-S cluster synthesis onto IscU, an Fe-S scaffold assembly protein, as well as other S acceptor proteins. The sequence is that of Cysteine desulfurase IscS from Helicobacter pylori (strain J99 / ATCC 700824) (Campylobacter pylori J99).